A 264-amino-acid chain; its full sequence is MNYIMCRNNLSQSSLPQLSSSAVNDANIDYFSLKPKLSLDTNSSGNSEIIYSDCDNNKNNNDDDDDDDDYNKDTYDELLDPFDTIAVNQHDLEYYSPLTPFEIQNTSPQDSIISSKSSNKSNSLQPFPLTLPNLTNYRFLIVDDNIINLKILNRVLLKLYPRSNIVQVQDSKLVNEILQRQHFDSVFLDIEMPDITGIDIAKFIRSDERFNQMAVIAVTTRNSAKDLQQYKECGIDHTFHKPLNYSLDLIGGSIDDIIERRKSL.

Residues 50–74 (IYSDCDNNKNNNDDDDDDDDYNKDT) form a disordered region. A compositionally biased stretch (acidic residues) spans 62–74 (DDDDDDDDYNKDT). The Response regulatory domain maps to 138 to 256 (RFLIVDDNII…LDLIGGSIDD (119 aa)). D189 carries the 4-aspartylphosphate modification.

In terms of biological role, required for stress adaptation, morphogenesis and virulence. The polypeptide is Stress response regulator protein 1 (SRR1) (Candida tropicalis (strain ATCC MYA-3404 / T1) (Yeast)).